The following is a 125-amino-acid chain: Salivary protein 15 Ipac-1 (125 aa).

An N-terminal signal peptide occupies residues 1–15 (MKVVCIILLFGIAAA). Residues Asn82 and Asn94 are each glycosylated (N-linked (GlcNAc...) asparagine). The interval 106–125 (GPSGQTCADKSKCVGHIPGC) is CD4-binding.

The protein belongs to the salp15 family. Interacts with host CD4. Interacts with host DC-SIGN (CD209). Interacts with Borrelia outer surface protein C (OspC). In terms of tissue distribution, expressed in salivary glands.

It is found in the secreted. In terms of biological role, salivary tick protein that downregulates host immune system by binding to both dendritic cells, and CD4(+) T cells. Specifically binds to the CD4 coreceptor on T cells. This interaction prevents the activation of the Src kinase, Lck, and its downstream substrate Zap-70, and results in deficient activation of PLCgamma1, the repression of calcium fluxes triggered by T-cell antigen receptor (TCR) ligation, and a subsequent reduction in interleukin-2 production. This salivary protein also binds to DC-SIGN (CD209) on dendritic cells (DC) and activates the Raf-1 kinase/MEK signaling pathway that results in down-regulating expression of pro-inflammatory cytokines. Furthermore, it inhibits T cell proliferation induced by DCs. It also inhibits in vitro keratinocyte inflammation induced by Borrelia burgdorferi or by the major outer surface protein (OspC) of Borrelia. In addition, it downregulates chemokines and monocyte chemoattractant protein 1, as well as several antimicrobial peptides such as defensins, cathelicidin, psoriasin, and RNase 7. Apart from its immunomodulatory activities, it is also associated with protection of Borrelia spirochetes from antibody-mediated killing through its binding to OspC. In vivo, tests on different immune disease animal models show promising therapeutic results, e.g., in inhibiting HIV infection, experimental autoimmune encephalomyelitis, transplantation rejection, and asthma. The sequence is that of Salivary protein 15 Ipac-1 from Ixodes pacificus (Western black-legged tick).